The primary structure comprises 683 residues: MPQQVRLSRENSVKRSRSLTKSFRGLFKFNSPGSPPSSAATSDSSEMSGAQGGRGNGLLGGRTKKASISPKSEAQFTQRNKSAESVVSDEGVAMVASAGAQFYGRGKHESSPNVLMTGGEEAARAAGRASAESIALSEGGPPSIDTKLERVTPSLIYPQNGRAKHSSQRSRSASVGRNKERGGPTPAPIGSIREEESKKAHKCIIQQEHFTVDENGNHQHSLKVLPLIVQDPESHKPKLFSFSAVFKSHKNGEDEELSDAFSILPDYSTVLEKTLVEPLSEVKIFSEAAQPDENGGRTEANQPKDMPKIVNKHAAIGNEELKLINNLSETIHVGMQGPDKHSSPPQPFTCKATKSKQVLAEKYGKCIGMIGQGAYGTVWVTCRSLPQDNQTETHYPTETYERNGKLFYAIKEIKPRADEPNEKFSTRLTSEFVIGHSLSGGAGGTKRLTSHPNILKVLDLMQAHDVFIEVFEFCPSGDLFSLLTRSSKTGSGLHPLEADCFMKQLLNGVRYMHDHGVAHCDLKPENILFTPNGTLKLCDFGSSSVFQTAWEKRVHFQTGAVGSEPYVAPEEFIPKREYDTRLVDCWSCGIIYCTMVLGHYLWKIAIKEKDQIYSAFLDDMTTRGEYYVFENMRHVNQEVNRCRKMCLYNIFQWDPKKRITIPKLLDTPWMRRTKCCVNYRAAI.

2 disordered regions span residues 1 to 90 (MPQQ…VSDE) and 157 to 200 (YPQN…SKKA). A compositionally biased stretch (low complexity) spans 36–48 (PSSAATSDSSEMS). Over residues 50-60 (AQGGRGNGLLG) the composition is skewed to gly residues. Residues 69–85 (SPKSEAQFTQRNKSAES) are compositionally biased toward polar residues. Residues 364 to 670 (GKCIGMIGQG…IPKLLDTPWM (307 aa)) enclose the Protein kinase domain. ATP-binding positions include 370-378 (IGQGAYGTV) and Lys-411. Asp-521 functions as the Proton acceptor in the catalytic mechanism.

The protein belongs to the protein kinase superfamily. CAMK Ser/Thr protein kinase family. NPR/HAL subfamily. HAL5 sub-subfamily.

It catalyses the reaction L-seryl-[protein] + ATP = O-phospho-L-seryl-[protein] + ADP + H(+). The enzyme catalyses L-threonyl-[protein] + ATP = O-phospho-L-threonyl-[protein] + ADP + H(+). The protein is Probable serine/threonine-protein kinase HAL5-like of Eremothecium gossypii (strain ATCC 10895 / CBS 109.51 / FGSC 9923 / NRRL Y-1056) (Yeast).